The chain runs to 196 residues: Ribonuclease HII (196 aa).

An RNase H type-2 domain is found at 15-196; the sequence is YIVAGIDEAG…RKSFRYSCFI (182 aa). Residues D21, E22, and D112 each contribute to the a divalent metal cation site.

Belongs to the RNase HII family. The cofactor is Mn(2+). Requires Mg(2+) as cofactor.

Its subcellular location is the cytoplasm. The enzyme catalyses Endonucleolytic cleavage to 5'-phosphomonoester.. Its function is as follows. Endonuclease that specifically degrades the RNA of RNA-DNA hybrids. The polypeptide is Ribonuclease HII (Rickettsia canadensis (strain McKiel)).